Here is a 115-residue protein sequence, read N- to C-terminus: UPF0212 protein MJ0068 (115 aa).

It belongs to the UPF0212 family.

In Methanocaldococcus jannaschii (strain ATCC 43067 / DSM 2661 / JAL-1 / JCM 10045 / NBRC 100440) (Methanococcus jannaschii), this protein is UPF0212 protein MJ0068.